Consider the following 332-residue polypeptide: Torsin-1A (332 aa).

Positions 1–20 are cleaved as a signal peptide; it reads MKLGRAVLGLLLLAPSVVQA. The interval 91 to 251 is interaction with SNAPIN; it reads KPKKPLTLSL…VSVFNNKNSG (161 aa). ATP is bound at residue 102–109; sequence GWTGTGKN. 2 N-linked (GlcNAc...) (high mannose) asparagine glycosylation sites follow: N143 and N158. An interaction with KLC1 region spans residues 251-332; it reads GFWHSSLIDR…FTKLDYYYDD (82 aa). The tract at residues 312 to 332 is interaction with SYNE3; sequence RVFSDKGCKTVFTKLDYYYDD.

It belongs to the ClpA/ClpB family. Torsin subfamily. In terms of assembly, homohexamer. Interacts with TOR1B; the interaction may be specific of neural tissues. Interacts (ATP-bound) with TOR1AIP1 and TOR1AIP2; the interactions induce ATPase activity. Interacts with KLHL14; preferentially when ATP-free. Interacts with KLC1 (via TPR repeats); the interaction associates TOR1A with the kinesin oligomeric complex. Interacts with COPS4; the interaction associates TOR1A with the CSN complex. Interacts with SNAPIN; the interaction is direct and associates SNAPIN with the CSN complex. Interacts with STON2. Interacts (ATP-bound) with SYNE3 (via KASH domain); the interaction is required for SYNE3 nuclear envelope localization. Interacts with VIM; the interaction associates TOR1A with the cytoskeleton. Interacts with PLEC. Interacts (ATP-bound) with SLC6A3; regulates SLC6A3 transport to the plasma membrane. N-glycosylated. As to expression, widely expressed. Highest levels in kidney and liver. In the brain, high levels found in the dopaminergic neurons of the substantia nigra pars compacta, as well as in the neocortex, hippocampus and cerebellum. Also highly expressed in the spinal cord.

It is found in the endoplasmic reticulum lumen. It localises to the nucleus membrane. The protein resides in the cell projection. The protein localises to the growth cone. Its subcellular location is the cytoplasmic vesicle membrane. It is found in the cytoplasmic vesicle. It localises to the secretory vesicle. The protein resides in the synaptic vesicle. The protein localises to the cytoplasm. Its subcellular location is the cytoskeleton. It carries out the reaction ATP + H2O = ADP + phosphate + H(+). Protein with chaperone functions important for the control of protein folding, processing, stability and localization as well as for the reduction of misfolded protein aggregates. Involved in the regulation of synaptic vesicle recycling, controls STON2 protein stability in collaboration with the COP9 signalosome complex (CSN). In the nucleus, may link the cytoskeleton with the nuclear envelope, this mechanism seems to be crucial for the control of nuclear polarity, cell movement and, specifically in neurons, nuclear envelope integrity. Participates in the cellular trafficking and may regulate the subcellular location of multipass membrane proteins such as the dopamine transporter SLC6A3, leading to the modulation of dopamine neurotransmission. In the endoplasmic reticulum, plays a role in the quality control of protein folding by increasing clearance of misfolded proteins such as SGCE variants or holding them in an intermediate state for proper refolding. May have a redundant function with TOR1B in non-neural tissues. The sequence is that of Torsin-1A (TOR1A) from Homo sapiens (Human).